Reading from the N-terminus, the 115-residue chain is Superoxide reductase (115 aa).

Positions 14, 16, 41, 47, 102, and 105 each coordinate Fe cation.

Belongs to the desulfoferrodoxin family. Homotetramer. Requires Fe cation as cofactor.

The catalysed reaction is reduced [rubredoxin] + superoxide + 2 H(+) = oxidized [rubredoxin] + H2O2. Uses electrons from reduced NADP, by way of rubredoxin and an oxidoreductase, to catalyze the reduction of superoxide to hydrogen peroxide. The chain is Superoxide reductase (sorA) from Pyrococcus horikoshii (strain ATCC 700860 / DSM 12428 / JCM 9974 / NBRC 100139 / OT-3).